The sequence spans 238 residues: Sugar fermentation stimulation protein homolog (238 aa).

The protein belongs to the SfsA family.

The chain is Sugar fermentation stimulation protein homolog from Brucella melitensis biotype 1 (strain ATCC 23456 / CCUG 17765 / NCTC 10094 / 16M).